Consider the following 997-residue polypeptide: LPS-assembly protein LptD (997 aa).

The first 27 residues, 1–27, serve as a signal peptide directing secretion; that stretch reads MLYSPLYQSIRLILFGALGLSSLTVSA.

Belongs to the LptD family. As to quaternary structure, component of the lipopolysaccharide transport and assembly complex. Interacts with LptE and LptA.

It localises to the cell outer membrane. Functionally, together with LptE, is involved in the assembly of lipopolysaccharide (LPS) at the surface of the outer membrane. This is LPS-assembly protein LptD from Psychrobacter cryohalolentis (strain ATCC BAA-1226 / DSM 17306 / VKM B-2378 / K5).